The following is a 432-amino-acid chain: Tryptophan--tRNA ligase, cytoplasmic (432 aa).

Residues 111-120 (PSSDSMHLGH) carry the 'HIGH' region motif. Positions 295 to 299 (KMSAS) match the 'KMSKS' region motif.

This sequence belongs to the class-I aminoacyl-tRNA synthetase family. In terms of assembly, homodimer.

It localises to the cytoplasm. The catalysed reaction is tRNA(Trp) + L-tryptophan + ATP = L-tryptophyl-tRNA(Trp) + AMP + diphosphate + H(+). The polypeptide is Tryptophan--tRNA ligase, cytoplasmic (WRS1) (Saccharomyces cerevisiae (strain ATCC 204508 / S288c) (Baker's yeast)).